The following is a 21-amino-acid chain: Neuropeptide gamma (21 aa).

The tract at residues S1–M21 is disordered. Residue M21 is modified to Methionine amide.

The protein belongs to the tachykinin family.

It localises to the secreted. Functionally, tachykinins are active peptides which excite neurons, evoke behavioral responses, and contract (directly or indirectly) many smooth muscles. Is a potent vasoconstrictor and secretagogue that plays a regulatory role in the central control of ventilation, in particular, the heart rate variability (HRV). This chain is Neuropeptide gamma, found in Oncorhynchus mykiss (Rainbow trout).